We begin with the raw amino-acid sequence, 322 residues long: Malate dehydrogenase (322 aa).

NAD(+) contacts are provided by residues 10–15 (GSGQIG) and Asp34. Positions 83 and 89 each coordinate substrate. NAD(+) contacts are provided by residues Asn96 and 119–121 (ITN). Substrate contacts are provided by Asn121 and Arg152. Catalysis depends on His176, which acts as the Proton acceptor.

Belongs to the LDH/MDH superfamily. MDH type 3 family.

It carries out the reaction (S)-malate + NAD(+) = oxaloacetate + NADH + H(+). Functionally, catalyzes the reversible oxidation of malate to oxaloacetate. This chain is Malate dehydrogenase, found in Nitrobacter winogradskyi (strain ATCC 25391 / DSM 10237 / CIP 104748 / NCIMB 11846 / Nb-255).